A 205-amino-acid chain; its full sequence is Protein phosphatase inhibitor 2 (205 aa).

Residues 1–44 are disordered; the sequence is MAASTASHRPIKGILKNKTSTTSSMVASAEQPRGNVDEELSKKS. Ala-2 is modified (N-acetylalanine). Required for binding PPP1CC regions lie at residues 12–17 and 43–55; these read KGILKN and KSQK…ILAT. Positions 17–26 are enriched in polar residues; it reads NKTSTTSSMV. A compositionally biased stretch (basic and acidic residues) spans 35-44; it reads NVDEELSKKS. Ser-44 carries the phosphoserine; by ATM modification. Thr-73 is modified (phosphothreonine; by GSK3). The residue at position 87 (Ser-87) is a Phosphoserine. 2 positions are modified to phosphothreonine: Thr-89 and Thr-92. The disordered stretch occupies residues 111-142; it reads EPKYRIQEQESSGEEDSDLSPEEREKKRQFEM. Ser-121, Ser-122, Ser-127, and Ser-130 each carry phosphoserine. Positions 121–130 are enriched in acidic residues; that stretch reads SSGEEDSDLS. Basic and acidic residues predominate over residues 131–142; it reads PEEREKKRQFEM. Positions 147-150 are required for binding PPP1CC catalytic center, displacing metal ions and inhibition of PPP1CC catalytic activity; it reads HYNE. Residues 163-205 are disordered; the sequence is KDLHDDDEDEEMLETADGESMNTEESNQGSTPSDQQQNKLRSS. The segment covering 167–179 has biased composition (acidic residues); the sequence is DDDEDEEMLETAD. A compositionally biased stretch (polar residues) spans 182 to 205; sequence SMNTEESNQGSTPSDQQQNKLRSS.

It belongs to the protein phosphatase inhibitor 2 family. In terms of assembly, heterodimer with PP1. In terms of processing, phosphorylation on Thr-73 by GSK3 activates PP1 by dissociating the PP1-PPP1R2 complex. Phosphorylation on Ser-44 by ATM activates PP1 by dissociating the PP1-PPP1R2 complex.

Functionally, inhibitor of protein-phosphatase 1. This is Protein phosphatase inhibitor 2 (PPP1R2) from Homo sapiens (Human).